A 444-amino-acid polypeptide reads, in one-letter code: Argininosuccinate synthase (444 aa).

ATP is bound by residues 17–25 and alanine 43; that span reads AFSGGLDTS. Position 99 (tyrosine 99) interacts with L-citrulline. ATP contacts are provided by glycine 129 and threonine 131. 3 residues coordinate L-aspartate: threonine 131, asparagine 135, and aspartate 136. Asparagine 135 serves as a coordination point for L-citrulline. Aspartate 136 lines the ATP pocket. Arginine 139 and serine 192 together coordinate L-citrulline. Aspartate 194 is an ATP binding site. Residues threonine 201, glutamate 203, and glutamate 280 each coordinate L-citrulline.

This sequence belongs to the argininosuccinate synthase family. Type 2 subfamily. Homotetramer.

It is found in the cytoplasm. It carries out the reaction L-citrulline + L-aspartate + ATP = 2-(N(omega)-L-arginino)succinate + AMP + diphosphate + H(+). Its pathway is amino-acid biosynthesis; L-arginine biosynthesis; L-arginine from L-ornithine and carbamoyl phosphate: step 2/3. The sequence is that of Argininosuccinate synthase from Paraburkholderia phymatum (strain DSM 17167 / CIP 108236 / LMG 21445 / STM815) (Burkholderia phymatum).